We begin with the raw amino-acid sequence, 466 residues long: Exodeoxyribonuclease 7 large subunit (466 aa).

The protein belongs to the XseA family. Heterooligomer composed of large and small subunits.

It is found in the cytoplasm. The catalysed reaction is Exonucleolytic cleavage in either 5'- to 3'- or 3'- to 5'-direction to yield nucleoside 5'-phosphates.. Its function is as follows. Bidirectionally degrades single-stranded DNA into large acid-insoluble oligonucleotides, which are then degraded further into small acid-soluble oligonucleotides. The polypeptide is Exodeoxyribonuclease 7 large subunit (Vesicomyosocius okutanii subsp. Calyptogena okutanii (strain HA)).